The sequence spans 1029 residues: Protein SUPPRESSOR OF PHYA-105 1 (1029 aa).

Residues 42–69 form a disordered region; that stretch reads SETANSDCPGSSAHRNVDLTKPPPPEEA. The Protein kinase domain maps to 188–529; the sequence is VQMKTPVSSS…ARDILKSELI (342 aa). Residues 194-202 and lysine 216 contribute to the ATP site; that span reads VSSSNFSQL. A disordered region spans residues 213 to 269; sequence VVGKNQETPPEFVSDQDLGSKEKKLDISKSPTPHDVLPLKSSPKGNGMVSHGDGNHS. Positions 230-239 are enriched in basic and acidic residues; that stretch reads LGSKEKKLDI. Aspartate 316 functions as the Proton acceptor in the catalytic mechanism. The tract at residues 347-392 is disordered; sequence EDLNRRRPVVEESSSGGRDSKKRKMDLHLNSPGNQLQATSTGRPFK. Residues 377-388 show a composition bias toward polar residues; the sequence is SPGNQLQATSTG. A coiled-coil region spans residues 557–589; sequence VQKKKKASKLLQDIQTLEDDIKEAERRYSSNVS. The tract at residues 653–679 is disordered; that stretch reads ARSDKTLKDRDRCSENQNENQDMSTKG. Positions 654 to 666 are enriched in basic and acidic residues; the sequence is RSDKTLKDRDRCS. The segment covering 667–679 has biased composition (polar residues); that stretch reads ENQNENQDMSTKG. WD repeat units follow at residues 714–753, 763–803, 806–846, 848–888, 892–930, 932–971, and 997–1029; these read NSAS…NESV, VNKS…GFSQ, EHQK…SLGT, WSPA…TPWC, GHEK…SSGL, PGAC…YSYY, and DNGQ…LKLV. The DWD box signature appears at 866–881; that stretch reads LAFGSADYKVYCYDLR.

As to quaternary structure, interacts with CO, COP1, HFR1, HY5 and PHYA. Light induces dissociation of the SPA1/COP1 complex. Binds to CRY1 in response to blue light, this interaction prevents SPA1/COP1 complex formation but stimulate CRY2/COP1 complex, and thus avoid COP1-dependent degradation of the transcription factor HY5 by the proteasome and promotes hypocotyl elongation.

The protein localises to the nucleus speckle. The protein resides in the nucleus. It is found in the PML body. Functionally, controls normal photoperiodic flowering and regulates circadian rhythms. Required for suppression of photomorphogenesis in dark-grown seedlings and for normal elongation growth of adult plants. Integral component of the COP1/SPA E3 ubiquitin-protein ligase complex. Involved in HY5, HFR1, LAF1 and CO degradation. The sequence is that of Protein SUPPRESSOR OF PHYA-105 1 (SPA1) from Arabidopsis thaliana (Mouse-ear cress).